Reading from the N-terminus, the 199-residue chain is dITP/XTP pyrophosphatase (199 aa).

Substrate is bound at residue 7–12 (SNNPGK). Aspartate 68 acts as the Proton acceptor in catalysis. Position 68 (aspartate 68) interacts with Mg(2+). Residues alanine 69, 154–157 (FGFD), lysine 177, and 182–183 (HR) each bind substrate.

This sequence belongs to the HAM1 NTPase family. In terms of assembly, homodimer. The cofactor is Mg(2+).

The catalysed reaction is XTP + H2O = XMP + diphosphate + H(+). The enzyme catalyses dITP + H2O = dIMP + diphosphate + H(+). It carries out the reaction ITP + H2O = IMP + diphosphate + H(+). Pyrophosphatase that catalyzes the hydrolysis of nucleoside triphosphates to their monophosphate derivatives, with a high preference for the non-canonical purine nucleotides XTP (xanthosine triphosphate), dITP (deoxyinosine triphosphate) and ITP. Seems to function as a house-cleaning enzyme that removes non-canonical purine nucleotides from the nucleotide pool, thus preventing their incorporation into DNA/RNA and avoiding chromosomal lesions. The chain is dITP/XTP pyrophosphatase from Verminephrobacter eiseniae (strain EF01-2).